The sequence spans 305 residues: Probable GTP 3',8-cyclase (305 aa).

One can recognise a Radical SAM core domain in the interval 6–233 (RHGRPVMSLR…MQDRKKYYID (228 aa)). Arg15 provides a ligand contact to GTP. [4Fe-4S] cluster is bound by residues Cys22 and Cys26. An S-adenosyl-L-methionine-binding site is contributed by Tyr28. Cys29 serves as a coordination point for [4Fe-4S] cluster. Arg62 contributes to the GTP binding site. Gly66 provides a ligand contact to S-adenosyl-L-methionine. Position 92 (Thr92) interacts with GTP. Residue Ser116 coordinates S-adenosyl-L-methionine. Lys153 serves as a coordination point for GTP. 2 residues coordinate [4Fe-4S] cluster: Cys249 and Cys252. 254–256 (RLR) contributes to the GTP binding site. Cys266 contacts [4Fe-4S] cluster.

Belongs to the radical SAM superfamily. MoaA family. Requires [4Fe-4S] cluster as cofactor.

It carries out the reaction GTP + AH2 + S-adenosyl-L-methionine = (8S)-3',8-cyclo-7,8-dihydroguanosine 5'-triphosphate + 5'-deoxyadenosine + L-methionine + A + H(+). It functions in the pathway cofactor biosynthesis; molybdopterin biosynthesis. Functionally, catalyzes the cyclization of GTP to (8S)-3',8-cyclo-7,8-dihydroguanosine 5'-triphosphate. This is Probable GTP 3',8-cyclase from Methanothermobacter thermautotrophicus (strain ATCC 29096 / DSM 1053 / JCM 10044 / NBRC 100330 / Delta H) (Methanobacterium thermoautotrophicum).